The primary structure comprises 1771 residues: Gag-Pro-Pol polyprotein (1771 aa).

Glycine 2 carries the N-myristoyl glycine; by host lipid modification. Residues 101 to 161 (AAVAQTEEIL…TKKPKRFPVL (61 aa)) constitute a propeptide that is removed on maturation. Composition is skewed to polar residues over residues 113 to 125 (NSQT…SQNP) and 140 to 152 (KSSS…LSST). The disordered stretch occupies residues 113 to 178 (NSQTDLTKTS…DPEDPNPSEV (66 aa)). Residues 202-205 (PPPY) carry the PPXY motif motif. The PTAP/PSAP motif signature appears at 210–213 (PSAP). Residues 216–257 (MAVVNPKEELKEKIAQLEEQIKLEELHQALISKLQKLKTGNE) are a coiled coil. The tract at residues 260–279 (THPDTAGGLSRTPHWPGQHI) is disordered. The short motif at 335 to 338 (ATAP) is the PTAP/PSAP motif element. CCHC-type zinc fingers lie at residues 547 to 564 (GCCF…NCHE) and 576 to 593 (GLCP…ECKS). A disordered region spans residues 592–626 (KSKTDNQGNPIPPHQGNRVEGPAPGPETSLWGSQL). The region spanning 780–856 (FTGLIDTGAD…LPVNLWGRDL (77 aa)) is the Peptidase A2 domain. Aspartate 785 (protease; shared with dimeric partner) is an active-site residue. The G-patch domain maps to 867-913 (PNDIVTAQMLAQGYSPGKGLGKKENGILHPIPNQGQSNKKGFGNFLT). The 189-residue stretch at 959–1147 (LEAGHITESS…DPYTYLGFEL (189 aa)) folds into the Reverse transcriptase domain. Positions 1024, 1099, 1100, 1370, 1399, 1420, and 1484 each coordinate Mg(2+). The 132-residue stretch at 1361-1492 (LNNALLVFTD…ADLATKIVAS (132 aa)) folds into the RNase H type-1 domain. The Integrase-type zinc-finger motif lies at 1496–1537 (TNLESAQNAHTLHHLNAQTLRLMFNIPREQARQIVKQCPICV). Zn(2+) is bound by residues histidine 1505, histidine 1509, cysteine 1533, and cysteine 1536. The region spanning 1550–1719 (RGLFPNMIWQ…NPKKQFAMVK (170 aa)) is the Integrase catalytic domain. Mg(2+) contacts are provided by aspartate 1561, aspartate 1618, and glutamate 1654. Residues 1716–1765 (AMVKWKDPLDNTWHGPDPVLIWGRGSVCVYSQTYDAARWLPERLVRQVSN) constitute a DNA-binding region (integrase-type).

This sequence belongs to the retroviral Pol polyprotein family. Homodimer. As to quaternary structure, interacts with the G-patch peptide. In terms of assembly, interacts with the reverse transcriptase/ribonuclease H. Homotrimer. Mg(2+) is required as a cofactor. Released by autocatalytic processing. The protease can undergo further autoprocessing to yield 2 shorter but enzymatically active forms of 12 kDa and 13 kDa. Post-translationally, myristoylated. Myristoylation of the matrix (MA) domain mediates the transport and binding of Gag polyproteins to the host plasma membrane and is required for the assembly of viral particles. In terms of processing, specific enzymatic cleavages in vivo yield mature proteins.

It localises to the virion. It carries out the reaction DNA(n) + a 2'-deoxyribonucleoside 5'-triphosphate = DNA(n+1) + diphosphate. The enzyme catalyses Endonucleolytic cleavage to 5'-phosphomonoester.. It catalyses the reaction dUTP + H2O = dUMP + diphosphate + H(+). In terms of biological role, matrix protein. Nucleocapsid protein p14: Nucleocapsid protein. Functionally, capsid protein. Its function is as follows. The aspartyl protease mediates proteolytic cleavages of Gag and Gag-Pol polyproteins during or shortly after the release of the virion from the plasma membrane. Cleavages take place as an ordered, step-wise cascade to yield mature proteins. This process is called maturation. Displays maximal activity during the budding process just prior to particle release from the cell. In terms of biological role, enhances the activity of the reverse transcriptase. May be part of the mature RT. RT is a multifunctional enzyme that converts the viral dimeric RNA genome into dsDNA in the cytoplasm, shortly after virus entry into the cell. This enzyme displays a DNA polymerase activity that can copy either DNA or RNA templates, and a ribonuclease H (RNase H) activity that cleaves the RNA strand of RNA-DNA heteroduplexes in a partially processive 3' to 5' endonucleasic mode. Conversion of viral genomic RNA into dsDNA requires many steps. A tRNA binds to the primer-binding site (PBS) situated at the 5' end of the viral RNA. RT uses the 3' end of the tRNA primer to perfom a short round of RNA-dependent minus-strand DNA synthesis. The reading proceeds through the U5 region and ends after the repeated (R) region which is present at both ends of viral RNA. The portion of the RNA-DNA heteroduplex is digested by the RNase H, resulting in a ssDNA product attached to the tRNA primer. This ssDNA/tRNA hybridizes with the identical R region situated at the 3' end of viral RNA. This template exchange, known as minus-strand DNA strong stop transfer, can be either intra- or intermolecular. RT uses the 3' end of this newly synthesized short ssDNA to perfom the RNA-dependent minus-strand DNA synthesis of the whole template. RNase H digests the RNA template except for a polypurine tract (PPT) situated at the 5' end of the genome. It is not clear if both polymerase and RNase H activities are simultaneous. RNase H probably can proceed both in a polymerase-dependent (RNA cut into small fragments by the same RT performing DNA synthesis) and a polymerase-independent mode (cleavage of remaining RNA fragments by free RTs). Secondly, RT performs DNA-directed plus-strand DNA synthesis using the PPT that has not been removed by RNase H as primers. PPT and tRNA primers are then removed by RNase H. The 3' and 5' ssDNA PBS regions hybridize to form a circular dsDNA intermediate. Strand displacement synthesis by RT to the PBS and PPT ends produces a blunt ended, linear dsDNA copy of the viral genome that includes long terminal repeats (LTRs) at both ends. Functionally, catalyzes viral DNA integration into the host chromosome, by performing a series of DNA cutting and joining reactions. This chain is Gag-Pro-Pol polyprotein (gag-pro-pol), found in Macaca mulatta (Rhesus macaque).